Consider the following 54-residue polypeptide: UPF0235 protein in proC 3'region (54 aa).

Belongs to the UPF0235 family.

The polypeptide is UPF0235 protein in proC 3'region (Vibrio alginolyticus).